The primary structure comprises 168 residues: ATP synthase subunit b (168 aa).

A helical membrane pass occupies residues 11-31; sequence EISIINTLWYLIVFSILLLAV.

This sequence belongs to the ATPase B chain family. In terms of assembly, F-type ATPases have 2 components, F(1) - the catalytic core - and F(0) - the membrane proton channel. F(1) has five subunits: alpha(3), beta(3), gamma(1), delta(1), epsilon(1). F(0) has three main subunits: a(1), b(2) and c(10-14). The alpha and beta chains form an alternating ring which encloses part of the gamma chain. F(1) is attached to F(0) by a central stalk formed by the gamma and epsilon chains, while a peripheral stalk is formed by the delta and b chains.

It is found in the cell membrane. F(1)F(0) ATP synthase produces ATP from ADP in the presence of a proton or sodium gradient. F-type ATPases consist of two structural domains, F(1) containing the extramembraneous catalytic core and F(0) containing the membrane proton channel, linked together by a central stalk and a peripheral stalk. During catalysis, ATP synthesis in the catalytic domain of F(1) is coupled via a rotary mechanism of the central stalk subunits to proton translocation. Functionally, component of the F(0) channel, it forms part of the peripheral stalk, linking F(1) to F(0). The sequence is that of ATP synthase subunit b from Lactobacillus delbrueckii subsp. bulgaricus (strain ATCC 11842 / DSM 20081 / BCRC 10696 / JCM 1002 / NBRC 13953 / NCIMB 11778 / NCTC 12712 / WDCM 00102 / Lb 14).